A 203-amino-acid chain; its full sequence is uncharacterized protein (203 aa).

Residues 171–191 form a helical membrane-spanning segment; it reads VGYLSIWLKEYWYLVVLFVLI.

The protein localises to the membrane. This is an uncharacterized protein from Methanocaldococcus jannaschii (strain ATCC 43067 / DSM 2661 / JAL-1 / JCM 10045 / NBRC 100440) (Methanococcus jannaschii).